The primary structure comprises 440 residues: Zinc finger MYND domain-containing protein 10 (440 aa).

C394, C397, C405, C408, C414, C418, H426, and C430 together coordinate Zn(2+). The segment at 394–430 adopts an MYND-type zinc-finger fold; the sequence is CGYCNAEASKRCSRCQNVWYCCRECQVKHWEKHGKTC.

The protein belongs to the ZMYND10 family. Interacts (via C-terminus) with DNAAF11 (via CS domain); this interaction stabilizes DNAAF11 at the protein level. Interacts (via C-terminus) with DNAL1; this interaction stabilizes DNAL1 at the protein level. Interacts with DNAAF4, HSPA8, IQUB, RUVBL2 and DYNTL5. Expressed in the testis. Expressed in the tracheal epithelium. Restricted to regions containing motile cilia.

Its subcellular location is the cytoplasm. The protein resides in the cytoskeleton. It localises to the microtubule organizing center. The protein localises to the centrosome. It is found in the centriolar satellite. Its subcellular location is the apical cell membrane. The protein resides in the dynein axonemal particle. Its function is as follows. Plays a role in axonemal structure organization and motility. Involved in axonemal pre-assembly of inner and outer dynein arms (IDA and ODA, respectively) for proper axoneme building for cilia motility. May act by indirectly regulating transcription of dynein proteins. The protein is Zinc finger MYND domain-containing protein 10 (Zmynd10) of Mus musculus (Mouse).